Here is a 393-residue protein sequence, read N- to C-terminus: uncharacterized protein (393 aa).

Residues M1 to L17 lie on the Cytoplasmic side of the membrane. The helical transmembrane segment at L18–F38 threads the bilayer. The Vacuolar portion of the chain corresponds to E39 to P46. A helical transmembrane segment spans residues F47–A67. Residues V68–E132 are Cytoplasmic-facing. At S93 the chain carries Phosphoserine. The helical transmembrane segment at F133–V153 threads the bilayer. Over A154–Q156 the chain is Vacuolar. The helical transmembrane segment at T157 to V176 threads the bilayer. The Cytoplasmic segment spans residues E177 to S182. A helical transmembrane segment spans residues K183–S200. At D201 to D219 the chain is on the vacuolar side. A helical transmembrane segment spans residues A220–Y240. Topologically, residues S241–K257 are cytoplasmic. The helical transmembrane segment at I258–L278 threads the bilayer. Over D279–P292 the chain is Vacuolar. A helical membrane pass occupies residues K293–A313. Residues K314–P321 lie on the Cytoplasmic side of the membrane. Residues L322–F342 traverse the membrane as a helical segment. Topologically, residues K343 to K345 are vacuolar. A helical transmembrane segment spans residues T346 to N366. Residues K367–N393 lie on the Cytoplasmic side of the membrane.

It belongs to the TPT transporter family.

Its subcellular location is the vacuole membrane. This is an uncharacterized protein from Saccharomyces cerevisiae (strain ATCC 204508 / S288c) (Baker's yeast).